The following is a 37-amino-acid chain: Cytochrome b6-f complex subunit 5 (37 aa).

A helical transmembrane segment spans residues 5–25; that stretch reads LLSGIVLGLIPVTLAGLFVTA.

The protein belongs to the PetG family. In terms of assembly, the 4 large subunits of the cytochrome b6-f complex are cytochrome b6, subunit IV (17 kDa polypeptide, PetD), cytochrome f and the Rieske protein, while the 4 small subunits are PetG, PetL, PetM and PetN. The complex functions as a dimer.

The protein localises to the plastid. The protein resides in the chloroplast thylakoid membrane. Functionally, component of the cytochrome b6-f complex, which mediates electron transfer between photosystem II (PSII) and photosystem I (PSI), cyclic electron flow around PSI, and state transitions. PetG is required for either the stability or assembly of the cytochrome b6-f complex. The sequence is that of Cytochrome b6-f complex subunit 5 from Chlorokybus atmophyticus (Soil alga).